A 396-amino-acid chain; its full sequence is Tryptophan synthase beta chain (396 aa).

K96 carries the post-translational modification N6-(pyridoxal phosphate)lysine.

Belongs to the TrpB family. Tetramer of two alpha and two beta chains. Pyridoxal 5'-phosphate serves as cofactor.

It catalyses the reaction (1S,2R)-1-C-(indol-3-yl)glycerol 3-phosphate + L-serine = D-glyceraldehyde 3-phosphate + L-tryptophan + H2O. It participates in amino-acid biosynthesis; L-tryptophan biosynthesis; L-tryptophan from chorismate: step 5/5. Functionally, the beta subunit is responsible for the synthesis of L-tryptophan from indole and L-serine. The protein is Tryptophan synthase beta chain of Azobacteroides pseudotrichonymphae genomovar. CFP2.